An 80-amino-acid polypeptide reads, in one-letter code: Clavanin-C (80 aa).

The first 19 residues, 1–19 (MKTTILILLILGLGINAKS), serve as a signal peptide directing secretion. The propeptide occupies 20 to 29 (LEERKSEEEK). At Phe-52 the chain carries Phenylalanine amide. Residues 54–80 (DDQQDNGKFYGHYAEDNGKHWYDTGDQ) constitute a propeptide that is removed on maturation.

Hemocytes and pharyngeal tissues.

It is found in the secreted. Has antimicrobial activity against E.coli, L.monocytogenes and C.albicans. This chain is Clavanin-C, found in Styela clava (Sea squirt).